The following is a 712-amino-acid chain: Polyribonucleotide nucleotidyltransferase (712 aa).

Asp-487 and Asp-493 together coordinate Mg(2+). Residues 554 to 613 form the KH domain; sequence PKIITMTINPDKIRDVIGPSGKQINKIIEETGVKIDIEQDGTVFISSINQEMNDKAKKII. Positions 623–691 constitute an S1 motif domain; it reads GEIYEAKVKR…KQGRVNLSRK (69 aa).

The protein belongs to the polyribonucleotide nucleotidyltransferase family. Requires Mg(2+) as cofactor.

It localises to the cytoplasm. The enzyme catalyses RNA(n+1) + phosphate = RNA(n) + a ribonucleoside 5'-diphosphate. In terms of biological role, involved in mRNA degradation. Catalyzes the phosphorolysis of single-stranded polyribonucleotides processively in the 3'- to 5'-direction. The sequence is that of Polyribonucleotide nucleotidyltransferase from Bacillus cereus (strain ATCC 14579 / DSM 31 / CCUG 7414 / JCM 2152 / NBRC 15305 / NCIMB 9373 / NCTC 2599 / NRRL B-3711).